Reading from the N-terminus, the 159-residue chain is Ribosomal RNA large subunit methyltransferase H (159 aa).

S-adenosyl-L-methionine-binding positions include leucine 76, glycine 108, and 127–132 (FSKMTF).

The protein belongs to the RNA methyltransferase RlmH family. As to quaternary structure, homodimer.

It localises to the cytoplasm. It carries out the reaction pseudouridine(1915) in 23S rRNA + S-adenosyl-L-methionine = N(3)-methylpseudouridine(1915) in 23S rRNA + S-adenosyl-L-homocysteine + H(+). In terms of biological role, specifically methylates the pseudouridine at position 1915 (m3Psi1915) in 23S rRNA. This chain is Ribosomal RNA large subunit methyltransferase H, found in Lachnoclostridium phytofermentans (strain ATCC 700394 / DSM 18823 / ISDg) (Clostridium phytofermentans).